A 304-amino-acid chain; its full sequence is Putative S-adenosyl-L-methionine-dependent methyltransferase MAV_4444 (304 aa).

Residues aspartate 130 and 159–160 (DL) contribute to the S-adenosyl-L-methionine site.

It belongs to the UPF0677 family.

In terms of biological role, exhibits S-adenosyl-L-methionine-dependent methyltransferase activity. In Mycobacterium avium (strain 104), this protein is Putative S-adenosyl-L-methionine-dependent methyltransferase MAV_4444.